Here is a 77-residue protein sequence, read N- to C-terminus: NAD(P)H-quinone oxidoreductase subunit L (77 aa).

2 helical membrane passes run 12 to 32 (LIAYIGIIFTYLLVIPLLLFY) and 47 to 67 (LGIYGLVFLFFPGLILFSPFL).

It belongs to the complex I NdhL subunit family. As to quaternary structure, NDH-1 can be composed of about 15 different subunits; different subcomplexes with different compositions have been identified which probably have different functions.

Its subcellular location is the cellular thylakoid membrane. The enzyme catalyses a plastoquinone + NADH + (n+1) H(+)(in) = a plastoquinol + NAD(+) + n H(+)(out). The catalysed reaction is a plastoquinone + NADPH + (n+1) H(+)(in) = a plastoquinol + NADP(+) + n H(+)(out). Its function is as follows. NDH-1 shuttles electrons from an unknown electron donor, via FMN and iron-sulfur (Fe-S) centers, to quinones in the respiratory and/or the photosynthetic chain. The immediate electron acceptor for the enzyme in this species is believed to be plastoquinone. Couples the redox reaction to proton translocation, and thus conserves the redox energy in a proton gradient. Cyanobacterial NDH-1 also plays a role in inorganic carbon-concentration. The sequence is that of NAD(P)H-quinone oxidoreductase subunit L from Prochlorococcus marinus (strain AS9601).